A 121-amino-acid polypeptide reads, in one-letter code: Large ribosomal subunit protein bL19 (121 aa).

Belongs to the bacterial ribosomal protein bL19 family.

Its function is as follows. This protein is located at the 30S-50S ribosomal subunit interface and may play a role in the structure and function of the aminoacyl-tRNA binding site. The protein is Large ribosomal subunit protein bL19 (rplS) of Chlamydia muridarum (strain MoPn / Nigg).